Reading from the N-terminus, the 122-residue chain is Histone H2B.2 (122 aa).

Over residues 1-10 (MAPKKAPAAT) the composition is skewed to low complexity. The segment at 1–28 (MAPKKAPAATTEKKVKKAPTTEKKNKKK) is disordered. A N,N,N-trimethylalanine modification is found at Ala2. N6-acetyllysine is present on residues Lys5 and Lys42. Residue Lys116 forms a Glycyl lysine isopeptide (Lys-Gly) (interchain with G-Cter in ubiquitin) linkage.

The protein belongs to the histone H2B family. As to quaternary structure, the nucleosome is a histone octamer containing two molecules each of H2A, H2B, H3 and H4 assembled in one H3-H4 heterotetramer and two H2A-H2B heterodimers. The octamer wraps approximately 147 bp of DNA. In terms of processing, acetylation occurs almost exclusively in the MAC. Post-translationally, monoubiquitination to form H2BK115ub1 gives a specific tag for epigenetic transcriptional activation and is also prerequisite for H3K4me and H3K79me formation.

It is found in the nucleus. The protein resides in the chromosome. In terms of biological role, core component of nucleosome. Nucleosomes wrap and compact DNA into chromatin, limiting DNA accessibility to the cellular machineries which require DNA as a template. Histones thereby play a central role in transcription regulation, DNA repair, DNA replication and chromosomal stability. DNA accessibility is regulated via a complex set of post-translational modifications of histones, also called histone code, and nucleosome remodeling. This is Histone H2B.2 (HTB2) from Tetrahymena thermophila (strain SB210).